The following is a 77-amino-acid chain: U14-theraphotoxin-Cg1a 1 (77 aa).

Residues Met-1 to Ala-21 form the signal peptide. Residues Ser-22–Arg-49 constitute a propeptide that is removed on maturation. 3 cysteine pairs are disulfide-bonded: Cys-50–Cys-64, Cys-57–Cys-69, and Cys-63–Cys-75. At Lys-77 the chain carries Lysine amide.

The protein belongs to the neurotoxin 10 (Hwtx-1) family. 65 (Jztx-21) subfamily. As to expression, expressed by the venom gland.

The protein localises to the secreted. Its function is as follows. Probable ion channel inhibitor. In Chilobrachys guangxiensis (Chinese earth tiger tarantula), this protein is U14-theraphotoxin-Cg1a 1.